A 427-amino-acid chain; its full sequence is 11-beta-hydroxysteroid dehydrogenase type 2 (427 aa).

82 to 111 (TRAVLITGCDSGFGNATAKKLDAMGFTVLA) provides a ligand contact to NAD(+). S219 contacts substrate. Y232 serves as the catalytic Proton acceptor.

It belongs to the short-chain dehydrogenases/reductases (SDR) family. Interacts with ligand-free cytoplasmic NR3C2. Highly expressed in the kidney and adrenal and at lower levels in the colon.

The protein localises to the microsome. Its subcellular location is the endoplasmic reticulum. The catalysed reaction is an 11beta-hydroxysteroid + NAD(+) = an 11-oxosteroid + NADH + H(+). It carries out the reaction corticosterone + NAD(+) = 11-dehydrocorticosterone + NADH + H(+). It catalyses the reaction cortisol + NAD(+) = cortisone + NADH + H(+). The enzyme catalyses 11beta,17beta-dihydroxyandrost-4-ene-3-one + NAD(+) = 17beta-hydroxyandrost-4-ene-3,11-dione + NADH + H(+). The catalysed reaction is 11beta-hydroxyandrost-4-ene-3,17-dione + NAD(+) = androst-4-ene-3,11,17-trione + NADH + H(+). It participates in steroid metabolism. Inhibited by glycyrrhetinic acid, carbenoloxone, 11-alpha-OH-progesterone and 11-beta-OH-progesterone. Its function is as follows. Catalyzes the conversion of biologically active 11beta-hydroxyglucocorticoids (11beta-hydroxysteroid) such as cortisol, to inactive 11-ketoglucocorticoids (11-oxosteroid) such as cortisone, in the presence of NAD(+). Functions as a dehydrogenase (oxidase), thereby decreasing the concentration of active glucocorticoids, thus protecting the nonselective mineralocorticoid receptor from occupation by glucocorticoids. Plays an important role in maintaining glucocorticoids balance during preimplantation and protects the fetus from excessive maternal corticosterone exposure. Catalyzes the oxidation of 11beta-hydroxytestosterone (11beta,17beta-dihydroxyandrost-4-ene-3-one) to 11-ketotestosterone (17beta-hydroxyandrost-4-ene-3,11-dione), a major bioactive androgen. Catalyzes the conversion of 11beta-hydroxyandrostenedione (11beta-hydroxyandrost-4-ene-3,17-dione) to 11-ketoandrostenedione (androst-4-ene-3,11,17-trione), which can be further metabolized to 11-ketotestosterone. Converts 7-beta-25-dihydroxycholesterol to 7-oxo-25-hydroxycholesterol in vitro. 7-beta-25-dihydroxycholesterol (not 7-oxo-25-hydroxycholesterol) acts as a ligand for the G-protein-coupled receptor (GPCR) Epstein-Barr virus-induced gene 2 (EBI2) and may thereby regulate immune cell migration. May protect ovulating oocytes and fertilizing spermatozoa from the adverse effects of cortisol. The sequence is that of 11-beta-hydroxysteroid dehydrogenase type 2 (HSD11B2) from Ovis aries (Sheep).